A 72-amino-acid chain; its full sequence is MLATKMSVTFCFLLMLTTVMLPTEAKTVAGRTACTQHTSCDTPGAKYCCQNSDCCGGSEHFCASFGQCMRSF.

Residues 1 to 21 (MLATKMSVTFCFLLMLTTVML) form the signal peptide. Positions 22–31 (PTEAKTVAGR) are excised as a propeptide.

The protein belongs to the teretoxin H (TH) superfamily. In terms of processing, contains 4 disulfide bonds. In terms of tissue distribution, expressed by the venom duct.

The protein localises to the secreted. In Terebra anilis (Auger snail), this protein is Teretoxin Tan11.1.